Here is a 28-residue protein sequence, read N- to C-terminus: Taicatoxin, alpha-neurotoxin-like component (28 aa).

The cysteines at positions 3 and 21 are disulfide-linked.

Belongs to the three-finger toxin family. Long-chain subfamily. Type II alpha-neurotoxin sub-subfamily. Heterotrimer composed of this alpha-neurotoxin-like peptide of 8 kDa, a neurotoxic phospholipase of 16 kDa (AC Q7LZG2) and a serine protease inhibitor of 7 kDa (AC B7S4N9) at an approximate stoichiometry of 1:1:4; non-covalently linked. In terms of tissue distribution, expressed by the venom gland.

The protein resides in the secreted. Functionally, the heterotrimer blocks the voltage-dependent L-type calcium channels (Cav1/CACNA1) from the heart, and the small conductance calcium-activated potassium channels (KCa2/KCNN) in the chromaffin cells and in the brain. Is very toxic to mice. This Oxyuranus scutellatus scutellatus (Australian taipan) protein is Taicatoxin, alpha-neurotoxin-like component.